A 500-amino-acid chain; its full sequence is Cytochrome P450 71B26 (500 aa).

A helical membrane pass occupies residues 1-21 (MDSIWILSLLFFIIFLLLAAF). Residue Cys-440 coordinates heme.

Belongs to the cytochrome P450 family. It depends on heme as a cofactor.

The protein resides in the membrane. This chain is Cytochrome P450 71B26 (CYP71B26), found in Arabidopsis thaliana (Mouse-ear cress).